The sequence spans 282 residues: Protease HtpX homolog (282 aa).

The next 2 membrane-spanning stretches (helical) occupy residues 6 to 26 (TFIL…LIGG) and 28 to 48 (QGVI…YFFS). Residue His-130 participates in Zn(2+) binding. The active site involves Glu-131. His-134 contributes to the Zn(2+) binding site. The next 2 membrane-spanning stretches (helical) occupy residues 140 to 160 (ILIG…ANFA) and 177 to 197 (ILMI…QMAI). Glu-202 contributes to the Zn(2+) binding site.

It belongs to the peptidase M48B family. Zn(2+) serves as cofactor.

It localises to the cell inner membrane. This chain is Protease HtpX homolog, found in Campylobacter hominis (strain ATCC BAA-381 / DSM 21671 / CCUG 45161 / LMG 19568 / NCTC 13146 / CH001A).